The primary structure comprises 137 residues: Histone H2B.1, sperm (137 aa).

A disordered region spans residues 1–43 (MPSQKSPTKRSPTKRSPQKGGKGAKRGGKAGKRRRGVAVKRRR). 3 consecutive short sequence motifs (SPKK motif) follow at residues 6–9 (SPTK), 11–14 (SPTK), and 16–19 (SPQK). Basic residues predominate over residues 7–43 (PTKRSPTKRSPQKGGKGAKRGGKAGKRRRGVAVKRRR). Residues S11 and S16 each carry the phosphoserine modification. O-linked (GlcNAc) serine glycosylation is present at S124. A Glycyl lysine isopeptide (Lys-Gly) (interchain with G-Cter in ubiquitin) cross-link involves residue K132.

The protein belongs to the histone H2B family. The nucleosome is a histone octamer containing two molecules each of H2A, H2B, H3 and H4 assembled in one H3-H4 heterotetramer and two H2A-H2B heterodimers. The octamer wraps approximately 147 bp of DNA. Monoubiquitination of Lys-132 gives a specific tag for epigenetic transcriptional activation and is also prerequisite for histone H3 'Lys-4' and 'Lys-79' methylation. Post-translationally, phosphorylated on SPKK motifs 2 and 3; which may regulate DNA binding. Dephosphorylated during maturation of spermatids to mature sperm and rephosphorylated at fertilization. In terms of processing, glcNAcylation at Ser-124 promotes monoubiquitination of Lys-132. It fluctuates in response to extracellular glucose, and associates with transcribed genes.

It is found in the nucleus. The protein localises to the chromosome. Core component of nucleosome. Nucleosomes wrap and compact DNA into chromatin, limiting DNA accessibility to the cellular machineries which require DNA as a template. Histones thereby play a central role in transcription regulation, DNA repair, DNA replication and chromosomal stability. DNA accessibility is regulated via a complex set of post-translational modifications of histones, also called histone code, and nucleosome remodeling. In Psammechinus miliaris (Green sea urchin), this protein is Histone H2B.1, sperm.